The primary structure comprises 792 residues: Receptor-like protein 54 (792 aa).

The N-terminal stretch at 1–21 (MKSNLAVFFITCFFCCVFVTS) is a signal peptide. Residues 22 to 758 (DSVYTLPFPF…PKQEHALNWK (737 aa)) lie on the Extracellular side of the membrane. N-linked (GlcNAc...) asparagine glycosylation is found at asparagine 68 and asparagine 107. LRR repeat units follow at residues 114–137 (QHLRYLDLSENHFDSSPIPSGFGR), 139–162 (TYLESLDLSKNGFIGEVPSSISNL), 163–187 (SRLTNLDLSYNKLTGGIPNLHSLTL), 189–209 (ENIDLSYNKFSGAIPSYLFTM), 211–233 (FLVSLNLRQNHLSDPLENINYSA), 235–258 (SKLLILDMAYNLMSHRILEPISKL), 259–282 (ANLIQIDLSFQKTPYTFNFDFLLF), 283–302 (KSLVRLDLSGNSVSVVGTGS), 303–324 (ENLTHLDLSSCNITEFPMFIKD), 325–349 (LQRLWWLDISNNRIKGKVPELLWTL), 351–374 (SMLHVNLSRNSFDSLEGTPKIILN), and 375–399 (SSISELDLSSNAFKGSFPIIPPYVN). N-linked (GlcNAc...) asparagine glycosylation is present at asparagine 161. Asparagine 230 is a glycosylation site (N-linked (GlcNAc...) asparagine). N-linked (GlcNAc...) asparagine glycans are attached at residues asparagine 304 and asparagine 314. Asparagine 356 and asparagine 374 each carry an N-linked (GlcNAc...) asparagine glycan. One copy of the LRR 13; degenerate repeat lies at 400 to 418 (IMAASNNYFTGGIPLIFCK). LRR repeat units lie at residues 419–443 (RYRLSLLDLSNNNFSGTIPRCLTNV), 444–470 (SLGLEALKLSNNSLTGRLPDIEDRLVL), 472–489 (DVGHNQISGKLPRSLVNC), and 490–515 (TTLKFLNVEGNHINDTFPFWLKALTR). N-linked (GlcNAc...) asparagine glycans are attached at residues asparagine 431, asparagine 442, asparagine 454, asparagine 488, and asparagine 503. The stretch at 516 to 536 (LEIIVLRSNRFHGPISSPEVS) is one LRR 18; degenerate repeat. LRR repeat units lie at residues 539-563 (FTALRIIDISRNSFNGSLPQNYFAN), 614-637 (DTYTSIDFSGNSFEGQIPESIGDL), 638-661 (KSLIVLDLSNNSFTGRIPSSLAKL), 662-685 (KQLESLDLSQNRISGNIPQELREL), and 687-709 (FLGYVNMSHNRLTGQIPQSTQVG). Asparagine 553 and asparagine 563 each carry an N-linked (GlcNAc...) asparagine glycan. Asparagine 647 carries N-linked (GlcNAc...) asparagine glycosylation. Asparagine 692 carries an N-linked (GlcNAc...) asparagine glycan. The helical transmembrane segment at 759 to 779 (AAAIGYGPGVLFGLAIGQAFA) threads the bilayer. The Cytoplasmic portion of the chain corresponds to 780 to 792 (RYKPVLFYKLFRL).

This sequence belongs to the RLP family.

It localises to the cell membrane. This is Receptor-like protein 54 from Arabidopsis thaliana (Mouse-ear cress).